A 322-amino-acid chain; its full sequence is Adenine deaminase (322 aa).

Zn(2+) contacts are provided by H11, H13, and H189. E192 (proton donor) is an active-site residue. D270 lines the Zn(2+) pocket. D271 is a binding site for substrate.

Belongs to the metallo-dependent hydrolases superfamily. Adenosine and AMP deaminases family. Adenine deaminase type 2 subfamily. Requires Zn(2+) as cofactor.

The catalysed reaction is adenine + H2O + H(+) = hypoxanthine + NH4(+). In terms of biological role, catalyzes the hydrolytic deamination of adenine to hypoxanthine. Plays an important role in the purine salvage pathway and in nitrogen catabolism. This chain is Adenine deaminase, found in Rhizobium johnstonii (strain DSM 114642 / LMG 32736 / 3841) (Rhizobium leguminosarum bv. viciae).